Reading from the N-terminus, the 91-residue chain is UPF0250 protein Psyr_4360 (91 aa).

The protein belongs to the UPF0250 family.

In Pseudomonas syringae pv. syringae (strain B728a), this protein is UPF0250 protein Psyr_4360.